The chain runs to 234 residues: LexA repressor (234 aa).

Positions 41-61 (RAEIANELGFKSANAAEEHLQ) form a DNA-binding region, H-T-H motif. Residues serine 152 and lysine 189 each act as for autocatalytic cleavage activity in the active site.

The protein belongs to the peptidase S24 family. As to quaternary structure, homodimer.

The catalysed reaction is Hydrolysis of Ala-|-Gly bond in repressor LexA.. Functionally, represses a number of genes involved in the response to DNA damage (SOS response), including recA and lexA. In the presence of single-stranded DNA, RecA interacts with LexA causing an autocatalytic cleavage which disrupts the DNA-binding part of LexA, leading to derepression of the SOS regulon and eventually DNA repair. In Polaromonas sp. (strain JS666 / ATCC BAA-500), this protein is LexA repressor.